A 727-amino-acid polypeptide reads, in one-letter code: Procollagen-lysine,2-oxoglutarate 5-dioxygenase 1 (727 aa).

The signal sequence occupies residues 1–18 (MRPLLLLALLGWLLLAEA). Asparagine 163, asparagine 197, and asparagine 538 each carry an N-linked (GlcNAc...) asparagine glycan. The Fe2OG dioxygenase domain maps to 636–727 (QFDLAFVVRY…RYIAVSFVDP (92 aa)). Histidine 656 and aspartate 658 together coordinate Fe cation. N-linked (GlcNAc...) asparagine glycosylation occurs at asparagine 686. Histidine 708 contacts Fe cation. Residue arginine 718 is part of the active site.

As to quaternary structure, homodimer. Identified in a complex with P3H3 and P3H4. The cofactor is Fe(2+). Requires L-ascorbate as cofactor.

The protein resides in the rough endoplasmic reticulum membrane. It catalyses the reaction L-lysyl-[collagen] + 2-oxoglutarate + O2 = (5R)-5-hydroxy-L-lysyl-[collagen] + succinate + CO2. Its function is as follows. Part of a complex composed of PLOD1, P3H3 and P3H4 that catalyzes hydroxylation of lysine residues in collagen alpha chains and is required for normal assembly and cross-linkling of collagen fibrils. Forms hydroxylysine residues in -Xaa-Lys-Gly- sequences in collagens. These hydroxylysines serve as sites of attachment for carbohydrate units and are essential for the stability of the intermolecular collagen cross-links. This is Procollagen-lysine,2-oxoglutarate 5-dioxygenase 1 (PLOD1) from Homo sapiens (Human).